A 753-amino-acid polypeptide reads, in one-letter code: 5-methyltetrahydropteroyltriglutamate--homocysteine methyltransferase (753 aa).

5-methyltetrahydropteroyltri-L-glutamate is bound by residues 17–20 and lysine 117; that span reads RELK. L-homocysteine is bound by residues 431-433 and glutamate 484; that span reads IGS. Residues 431-433 and glutamate 484 contribute to the L-methionine site; that span reads IGS. 5-methyltetrahydropteroyltri-L-glutamate contacts are provided by residues 515–516 and tryptophan 561; that span reads RC. Aspartate 599 lines the L-homocysteine pocket. L-methionine is bound at residue aspartate 599. A 5-methyltetrahydropteroyltri-L-glutamate-binding site is contributed by glutamate 605. The Zn(2+) site is built by histidine 641, cysteine 643, and glutamate 665. The active-site Proton donor is the histidine 694. Residue cysteine 726 participates in Zn(2+) binding.

This sequence belongs to the vitamin-B12 independent methionine synthase family. Zn(2+) serves as cofactor.

It carries out the reaction 5-methyltetrahydropteroyltri-L-glutamate + L-homocysteine = tetrahydropteroyltri-L-glutamate + L-methionine. Its pathway is amino-acid biosynthesis; L-methionine biosynthesis via de novo pathway; L-methionine from L-homocysteine (MetE route): step 1/1. Functionally, catalyzes the transfer of a methyl group from 5-methyltetrahydrofolate to homocysteine resulting in methionine formation. This Escherichia coli O9:H4 (strain HS) protein is 5-methyltetrahydropteroyltriglutamate--homocysteine methyltransferase.